We begin with the raw amino-acid sequence, 236 residues long: MQNFHPRHFAIVPAAGSGSRMGSERPKQYLPLLGKPLIYHTLSVLCAAPEIDKVFVVLSVGDAEWGRHDWRALGPKLVPLFCGGPTRADSVLAGLRAIAGEAVQSDWVLVHDAARPCLAPWHIDKLVRELAGDEVGGLLAVPVADTLKRADGHRHVAATVPRDSLWQAQTPQMFRYVMLRRALESATDVTDEASAIEAAGLRPRLVQGDATNLKVTYPLDLHLAEWILNNRTGVQQ.

It belongs to the IspD/TarI cytidylyltransferase family. IspD subfamily.

It carries out the reaction 2-C-methyl-D-erythritol 4-phosphate + CTP + H(+) = 4-CDP-2-C-methyl-D-erythritol + diphosphate. It participates in isoprenoid biosynthesis; isopentenyl diphosphate biosynthesis via DXP pathway; isopentenyl diphosphate from 1-deoxy-D-xylulose 5-phosphate: step 2/6. Catalyzes the formation of 4-diphosphocytidyl-2-C-methyl-D-erythritol from CTP and 2-C-methyl-D-erythritol 4-phosphate (MEP). In Azoarcus sp. (strain BH72), this protein is 2-C-methyl-D-erythritol 4-phosphate cytidylyltransferase.